The chain runs to 425 residues: Adenylosuccinate synthetase (425 aa).

GTP is bound by residues 12 to 18 and 40 to 42; these read GDEGKAK and GHT. D13 acts as the Proton acceptor in catalysis. Residues D13 and G40 each contribute to the Mg(2+) site. IMP is bound by residues 13–16, 38–41, T130, R144, Q224, T239, and R303; these read DEGK and NAGH. The active-site Proton donor is the H41. A substrate-binding site is contributed by 299 to 305; the sequence is ATTGRPR. Residues R305, 331-333, and 411-413 contribute to the GTP site; these read KID and STG.

The protein belongs to the adenylosuccinate synthetase family. Homodimer. It depends on Mg(2+) as a cofactor.

The protein resides in the cytoplasm. The enzyme catalyses IMP + L-aspartate + GTP = N(6)-(1,2-dicarboxyethyl)-AMP + GDP + phosphate + 2 H(+). It functions in the pathway purine metabolism; AMP biosynthesis via de novo pathway; AMP from IMP: step 1/2. Functionally, plays an important role in the de novo pathway of purine nucleotide biosynthesis. Catalyzes the first committed step in the biosynthesis of AMP from IMP. The sequence is that of Adenylosuccinate synthetase from Leptospira interrogans serogroup Icterohaemorrhagiae serovar copenhageni (strain Fiocruz L1-130).